The chain runs to 406 residues: Tryptophan synthase beta chain (406 aa).

Lysine 99 is subject to N6-(pyridoxal phosphate)lysine.

The protein belongs to the TrpB family. Tetramer of two alpha and two beta chains. Pyridoxal 5'-phosphate is required as a cofactor.

The enzyme catalyses (1S,2R)-1-C-(indol-3-yl)glycerol 3-phosphate + L-serine = D-glyceraldehyde 3-phosphate + L-tryptophan + H2O. The protein operates within amino-acid biosynthesis; L-tryptophan biosynthesis; L-tryptophan from chorismate: step 5/5. The beta subunit is responsible for the synthesis of L-tryptophan from indole and L-serine. The sequence is that of Tryptophan synthase beta chain from Brucella anthropi (strain ATCC 49188 / DSM 6882 / CCUG 24695 / JCM 21032 / LMG 3331 / NBRC 15819 / NCTC 12168 / Alc 37) (Ochrobactrum anthropi).